A 279-amino-acid chain; its full sequence is Thymidylate synthase (279 aa).

Arg141 to Arg142 is a dUMP binding site. Cys161 serves as the catalytic Nucleophile. DUMP-binding positions include Arg181 to Asp184, Asn192, and His222 to Tyr224. Asp184 is a (6R)-5,10-methylene-5,6,7,8-tetrahydrofolate binding site. Ala278 serves as a coordination point for (6R)-5,10-methylene-5,6,7,8-tetrahydrofolate.

It belongs to the thymidylate synthase family. Bacterial-type ThyA subfamily. As to quaternary structure, homodimer.

It is found in the cytoplasm. It catalyses the reaction dUMP + (6R)-5,10-methylene-5,6,7,8-tetrahydrofolate = 7,8-dihydrofolate + dTMP. The protein operates within pyrimidine metabolism; dTTP biosynthesis. Functionally, catalyzes the reductive methylation of 2'-deoxyuridine-5'-monophosphate (dUMP) to 2'-deoxythymidine-5'-monophosphate (dTMP) while utilizing 5,10-methylenetetrahydrofolate (mTHF) as the methyl donor and reductant in the reaction, yielding dihydrofolate (DHF) as a by-product. This enzymatic reaction provides an intracellular de novo source of dTMP, an essential precursor for DNA biosynthesis. In Bacillus subtilis subsp. natto, this protein is Thymidylate synthase.